The following is a 649-amino-acid chain: Arylsulfatase (649 aa).

The first 22 residues, 1 to 22 (MLQRLVVALCLLGFAALTAAAA), serve as a signal peptide directing secretion. Asp-34 and Asp-35 together coordinate Ca(2+). The N-linked (GlcNAc...) asparagine glycan is linked to Asn-41. Cys-72 lines the Ca(2+) pocket. The active-site Nucleophile is Cys-72. Position 72 is a 3-oxoalanine (Cys) (Cys-72). Residues Asn-89, Asn-224, and Asn-279 are each glycosylated (N-linked (GlcNAc...) asparagine). Positions 324 and 325 each coordinate Ca(2+). N-linked (GlcNAc...) asparagine glycosylation is found at Asn-445, Asn-489, and Asn-531.

It belongs to the sulfatase family. Ca(2+) is required as a cofactor. In terms of processing, the conversion to 3-oxoalanine (also known as C-formylglycine, FGly), of a serine or cysteine residue in prokaryotes and of a cysteine residue in eukaryotes, is critical for catalytic activity.

It localises to the periplasm. The enzyme catalyses an aryl sulfate + H2O = a phenol + sulfate + H(+). Its activity is regulated as follows. Inhibited by Na(3)BO(3) and KCN. No inhibition by sodium dodecyl sulfate, even at high concentration. Functionally, is commonly produced by soil microorganisms and plays an important role in the mineralization of sulfates. This chain is Arylsulfatase, found in Volvox carteri (Green alga).